The sequence spans 119 residues: Large ribosomal subunit protein bL20 (119 aa).

It belongs to the bacterial ribosomal protein bL20 family.

Functionally, binds directly to 23S ribosomal RNA and is necessary for the in vitro assembly process of the 50S ribosomal subunit. It is not involved in the protein synthesizing functions of that subunit. The chain is Large ribosomal subunit protein bL20 from Acidithiobacillus ferrooxidans (strain ATCC 23270 / DSM 14882 / CIP 104768 / NCIMB 8455) (Ferrobacillus ferrooxidans (strain ATCC 23270)).